The chain runs to 353 residues: Probable dual-specificity RNA methyltransferase RlmN (353 aa).

E95 serves as the catalytic Proton acceptor. Residues 103–333 (DGGRKTICIS…PILNRRSPGR (231 aa)) enclose the Radical SAM core domain. An intrachain disulfide couples C110 to C339. [4Fe-4S] cluster-binding residues include C117, C121, and C124. S-adenosyl-L-methionine contacts are provided by residues 164–165 (GE), S196, 219–221 (SLN), and N296. The S-methylcysteine intermediate role is filled by C339.

Belongs to the radical SAM superfamily. RlmN family. It depends on [4Fe-4S] cluster as a cofactor.

Its subcellular location is the cytoplasm. It carries out the reaction adenosine(2503) in 23S rRNA + 2 reduced [2Fe-2S]-[ferredoxin] + 2 S-adenosyl-L-methionine = 2-methyladenosine(2503) in 23S rRNA + 5'-deoxyadenosine + L-methionine + 2 oxidized [2Fe-2S]-[ferredoxin] + S-adenosyl-L-homocysteine. It catalyses the reaction adenosine(37) in tRNA + 2 reduced [2Fe-2S]-[ferredoxin] + 2 S-adenosyl-L-methionine = 2-methyladenosine(37) in tRNA + 5'-deoxyadenosine + L-methionine + 2 oxidized [2Fe-2S]-[ferredoxin] + S-adenosyl-L-homocysteine. Its function is as follows. Specifically methylates position 2 of adenine 2503 in 23S rRNA and position 2 of adenine 37 in tRNAs. The chain is Probable dual-specificity RNA methyltransferase RlmN from Leptospira biflexa serovar Patoc (strain Patoc 1 / Ames).